A 347-amino-acid polypeptide reads, in one-letter code: S-adenosylmethionine:tRNA ribosyltransferase-isomerase (347 aa).

It belongs to the QueA family. In terms of assembly, monomer.

The protein localises to the cytoplasm. It catalyses the reaction 7-aminomethyl-7-carbaguanosine(34) in tRNA + S-adenosyl-L-methionine = epoxyqueuosine(34) in tRNA + adenine + L-methionine + 2 H(+). Its pathway is tRNA modification; tRNA-queuosine biosynthesis. Transfers and isomerizes the ribose moiety from AdoMet to the 7-aminomethyl group of 7-deazaguanine (preQ1-tRNA) to give epoxyqueuosine (oQ-tRNA). The chain is S-adenosylmethionine:tRNA ribosyltransferase-isomerase from Streptococcus thermophilus (strain ATCC BAA-491 / LMD-9).